Here is a 287-residue protein sequence, read N- to C-terminus: Syntaxin-11 (287 aa).

A coiled-coil region spans residues 41-71 (LESLYRVIQDIQDENQLLLIDVRRLGRQNVR). The 63-residue stretch at 204–266 (LNEIESRHRE…GEAKAQVRKA (63 aa)) folds into the t-SNARE coiled-coil homology domain.

Belongs to the syntaxin family. Interacts with the SNARE proteins SNAP-23 and VAMP.

The protein resides in the membrane. The protein localises to the golgi apparatus. It localises to the trans-Golgi network membrane. Functionally, SNARE that acts to regulate protein transport between late endosomes and the trans-Golgi network. This chain is Syntaxin-11 (Stx11), found in Mus musculus (Mouse).